Reading from the N-terminus, the 1165-residue chain is Chromosome partition protein Smc (1165 aa).

32–39 (PNGSGKSN) lines the ATP pocket. Residues 161–503 (AGVAEFDRKI…ETQRQVWREA (343 aa)) adopt a coiled-coil conformation. An SMC hinge domain is found at 518 to 630 (QGVHGLISQL…VFRSLELARR (113 aa)). 2 coiled-coil regions span residues 672-901 (ELAE…LQQR) and 946-1010 (DLSL…DCDT).

Belongs to the SMC family. As to quaternary structure, homodimer.

Its subcellular location is the cytoplasm. Functionally, required for chromosome condensation and partitioning. This chain is Chromosome partition protein Smc, found in Gloeobacter violaceus (strain ATCC 29082 / PCC 7421).